A 616-amino-acid polypeptide reads, in one-letter code: General alpha-glucoside permease (616 aa).

Topologically, residues 1–115 are cytoplasmic; that stretch reads MKNIISLVSK…AALWSILVST (115 aa). Basic and acidic residues predominate over residues 15–27; that stretch reads SKNEDKNISESSR. Residues 15 to 40 form a disordered region; it reads SKNEDKNISESSRDIVNQQEVFNTED. The helical transmembrane segment at 116-136 threads the bilayer; that stretch reads TLVMEGYDTALLSALYALPVF. The Extracellular segment spans residues 137 to 160; the sequence is QRKFGTLNGEGSYEITSQWQIGLN. The chain crosses the membrane as a helical span at residues 161–181; it reads MCVLCGEMIGLQITTYMVEFM. At 182 to 191 the chain is on the cytoplasmic side; that stretch reads GNRYTMITAL. The chain crosses the membrane as a helical span at residues 192–212; sequence GLLTAYIFILYYCKSLAMIAV. The Extracellular portion of the chain corresponds to 213–214; sequence GQ. Residues 215–235 traverse the membrane as a helical segment; it reads ILSAIPWGCFQSLAVTYASEV. Topologically, residues 236–242 are cytoplasmic; it reads CPLALRY. The chain crosses the membrane as a helical span at residues 243–263; the sequence is YMTSYSNICWLFGQIFASGIM. Residues 264–278 are Extracellular-facing; that stretch reads KNSQENLGNSDLGYK. Residues 279-299 form a helical membrane-spanning segment; sequence LPFALQWIWPAPLMIGIFFAP. The Cytoplasmic segment spans residues 300–373; the sequence is ESPWWLVRKD…VNGRRTRLAC (74 aa). The helical transmembrane segment at 374-394 threads the bilayer; sequence LTWVAQNSSGAVLLGYSTYFF. The Extracellular segment spans residues 395 to 404; the sequence is ERAGMATDKA. Residues 405 to 425 form a helical membrane-spanning segment; the sequence is FTFSLIQYCLGLAGTLCSWVI. Topologically, residues 426 to 433 are cytoplasmic; sequence SGRVGRWT. A helical membrane pass occupies residues 434-454; that stretch reads ILTYGLAFQMVCLFIIGGMGF. Over 455-466 the chain is Extracellular; it reads GSGSSASNGAGG. The chain crosses the membrane as a helical span at residues 467–487; that stretch reads LLLALSFFYNAGIGAVVYCIV. Residues 488–504 lie on the Cytoplasmic side of the membrane; it reads AEIPSAELRTKTIVLAR. Residues 505-525 form a helical membrane-spanning segment; the sequence is ICYNLMAVINAILTPYMLNVS. Topologically, residues 526–532 are extracellular; sequence DWNWGAK. The chain crosses the membrane as a helical span at residues 533 to 553; it reads TGLYWGGFTAVTLAWVIIDLP. Residues 554-616 lie on the Cytoplasmic side of the membrane; it reads ETTGRTFSEI…QRELNAADKC (63 aa). A disordered region spans residues 587-616; the sequence is GKTQHDSLADESISQSSSIKQRELNAADKC. The segment covering 606–616 has biased composition (basic and acidic residues); it reads KQRELNAADKC.

This sequence belongs to the major facilitator superfamily. Sugar transporter (TC 2.A.1.1) family.

It is found in the cell membrane. High-affinity uptake of alpha-glucosides such as maltose, turanose, isomaltose, alpha-methylglucoside, maltotriose, palatinose, trehalose, melezitose and glucose. Acts with the concomitant transport of protons into the cell (symport system). Provides an alternative and minor mechanism for growth on trehalose carbon source by transporting trehalose into the cytoplasm for conversion to glucose by neutral trehalase NTH1. This Saccharomyces cerevisiae (strain CEN.PK113-7D) (Baker's yeast) protein is General alpha-glucoside permease.